Here is a 557-residue protein sequence, read N- to C-terminus: Nicotinate phosphoribosyltransferase 2 (557 aa).

2 residues coordinate nicotinate: Tyr-31 and Thr-219. The residue at position 222 (His-222) is a Phosphohistidine. Arg-329 contacts nicotinate. Thr-391 contacts 5-phospho-alpha-D-ribose 1-diphosphate.

Belongs to the NAPRTase family. Requires Mg(2+) as cofactor. Mn(2+) serves as cofactor. In terms of processing, transiently phosphorylated on a His residue during the reaction cycle. Phosphorylation strongly increases the affinity for substrates and increases the rate of nicotinate D-ribonucleotide production. Dephosphorylation regenerates the low-affinity form of the enzyme, leading to product release.

It catalyses the reaction nicotinate + 5-phospho-alpha-D-ribose 1-diphosphate + ATP + H2O = nicotinate beta-D-ribonucleotide + ADP + phosphate + diphosphate. It participates in cofactor biosynthesis; NAD(+) biosynthesis; nicotinate D-ribonucleotide from nicotinate: step 1/1. Functionally, catalyzes the first step in the biosynthesis of NAD from nicotinic acid, the ATP-dependent synthesis of beta-nicotinate D-ribonucleotide from nicotinate and 5-phospho-D-ribose 1-phosphate. Helps prevent cellular oxidative stress via its role in NAD biosynthesis. The chain is Nicotinate phosphoribosyltransferase 2 from Arabidopsis thaliana (Mouse-ear cress).